The sequence spans 506 residues: Histidine ammonia-lyase (506 aa).

The segment at residues 143 to 145 is a cross-link (5-imidazolinone (Ala-Gly)); it reads ASG. The residue at position 144 (Ser-144) is a 2,3-didehydroalanine (Ser).

This sequence belongs to the PAL/histidase family. Contains an active site 4-methylidene-imidazol-5-one (MIO), which is formed autocatalytically by cyclization and dehydration of residues Ala-Ser-Gly.

The protein localises to the cytoplasm. The catalysed reaction is L-histidine = trans-urocanate + NH4(+). Its pathway is amino-acid degradation; L-histidine degradation into L-glutamate; N-formimidoyl-L-glutamate from L-histidine: step 1/3. The sequence is that of Histidine ammonia-lyase from Salmonella choleraesuis (strain SC-B67).